The following is a 188-amino-acid chain: Peptidyl-tRNA hydrolase (188 aa).

Residue Tyr14 participates in tRNA binding. The active-site Proton acceptor is His19. Residues Tyr64, Asn66, and Asn112 each contribute to the tRNA site.

This sequence belongs to the PTH family. Monomer.

The protein localises to the cytoplasm. The catalysed reaction is an N-acyl-L-alpha-aminoacyl-tRNA + H2O = an N-acyl-L-amino acid + a tRNA + H(+). Its function is as follows. Hydrolyzes ribosome-free peptidyl-tRNAs (with 1 or more amino acids incorporated), which drop off the ribosome during protein synthesis, or as a result of ribosome stalling. Catalyzes the release of premature peptidyl moieties from peptidyl-tRNA molecules trapped in stalled 50S ribosomal subunits, and thus maintains levels of free tRNAs and 50S ribosomes. The protein is Peptidyl-tRNA hydrolase of Bacillus licheniformis (strain ATCC 14580 / DSM 13 / JCM 2505 / CCUG 7422 / NBRC 12200 / NCIMB 9375 / NCTC 10341 / NRRL NRS-1264 / Gibson 46).